Reading from the N-terminus, the 493-residue chain is Alpha-amylase-related protein (493 aa).

An N-terminal signal peptide occupies residues 1-19 (MFKLALTLTLCLAGSLSLA). Glutamine 20 is modified (pyrrolidone carboxylic acid). Cysteine 47 and cysteine 103 are oxidised to a cystine. Ca(2+) contacts are provided by asparagine 117, glutamine 168, and aspartate 177. An intrachain disulfide couples cysteine 156 to cysteine 170. A chloride-binding site is contributed by arginine 205. The active-site Nucleophile is aspartate 207. Histidine 211 contributes to the Ca(2+) binding site. Residue glutamate 244 is the Proton donor of the active site. Chloride-binding residues include asparagine 307 and arginine 342. Disulfide bonds link cysteine 375–cysteine 381, cysteine 417–cysteine 440, and cysteine 447–cysteine 459.

The protein belongs to the glycosyl hydrolase 13 family. Monomer. Requires Ca(2+) as cofactor. The cofactor is chloride.

It is found in the secreted. It catalyses the reaction Endohydrolysis of (1-&gt;4)-alpha-D-glucosidic linkages in polysaccharides containing three or more (1-&gt;4)-alpha-linked D-glucose units.. This is Alpha-amylase-related protein (Amyrel) from Drosophila yakuba (Fruit fly).